Consider the following 149-residue polypeptide: Large ribosomal subunit protein bL9 (149 aa).

The protein belongs to the bacterial ribosomal protein bL9 family.

Functionally, binds to the 23S rRNA. This is Large ribosomal subunit protein bL9 from Fervidobacterium nodosum (strain ATCC 35602 / DSM 5306 / Rt17-B1).